Reading from the N-terminus, the 327-residue chain is Serpentine receptor class gamma-2 (327 aa).

6 consecutive transmembrane segments (helical) span residues 35 to 55 (LVQF…LYIL), 70 to 90 (ILFI…IFFA), 157 to 177 (MKYA…NIII), 181 to 203 (LPVY…ATMT), 244 to 264 (IASF…SLFA), and 277 to 297 (FLLP…MVMA).

It belongs to the nematode receptor-like protein srg family.

The protein localises to the membrane. The chain is Serpentine receptor class gamma-2 (srg-2) from Caenorhabditis elegans.